We begin with the raw amino-acid sequence, 753 residues long: MTTSPGGPETKGRTAEVDINPVSASLEVAGKPGHFNKSLSKGPQTTTWIWNLHALAHDFDTQTNDLEEISRKIFSAHFGHLSIIFVWISGMIFHAARFSNYYAWLADPLGNKPSAHVVWPIVGQDILNADVGNGFRGVQITSGLFHILRGAGMTDPGELYSAAIGALVAAVVMMYAGYYHYHKKAPKLEWFQNAESTMTHHLIVLLGLGNLAWTGHLIHVSLPVNKLLDSGVAPQDIPIPHEFLFDNGFMADLYPSFAQGLMPYFTLNWGAYSDFLTFKGGLDPTTGGLWMTDIAHHHLALAVMYIIAGHMYRTNWGIGHSMKEIMESHKGPFTGEGHKGLYEVLTTSWHAQLAINLATWGSFSIIVAHHMYAMPPYPYLATDYGTQLNLFVHHMWIGGFLIVGGAAHAAIFMVRDYDPAVNQNNVLDRMLRHRDTIISHLNWVCIFLGFHSFGLYIHNDNMRSLGRPQDMFSDTAIQLQPIFSQWVQNLQANVAGTIRAPLAEGASSLAWGGDPLFVGGKVAMQHVSLGTADFMIHHIHAFQIHVTVLILIKGVLYARSSRLIPDKANLGFRFPCDGPGRGGTCQSSGWDHIFLGLFWMYNCISIVNFHFFWKMQSDVWGAANANGGVNYLTAGNWAQSSITINGWLRDFLWAQSVQVINSYGSALSAYGILFLGAHFIWAFSLMFLFSGRGYWQELIESIVWAHSKLKIAPAIQPRAMSITQGRAVGLGHYLLGGIVTSWSFYLARILALG.

Helical transmembrane passes span 73–96, 159–182, 198–222, 294–312, 349–372, 388–414, 436–458, and 534–552; these read IFSA…FHAA, LYSA…YHYH, MTHH…HVSL, IAHH…GHMY, WHAQ…HHMY, LNLF…IFMV, TIIS…LYIH, and FMIH…LILI. Positions 576 and 585 each coordinate [4Fe-4S] cluster. Helical transmembrane passes span 592 to 613 and 667 to 689; these read HIFL…HFFW and LSAY…MFLF. Residue histidine 678 coordinates chlorophyll a'. Chlorophyll a-binding residues include methionine 686 and tyrosine 694. Residue tryptophan 695 coordinates phylloquinone. The chain crosses the membrane as a helical span at residues 727 to 747; it reads AVGLGHYLLGGIVTSWSFYLA.

This sequence belongs to the PsaA/PsaB family. As to quaternary structure, the PsaA/B heterodimer binds the P700 chlorophyll special pair and subsequent electron acceptors. PSI consists of a core antenna complex that captures photons, and an electron transfer chain that converts photonic excitation into a charge separation. The cyanobacterial PSI reaction center is composed of one copy each of PsaA,B,C,D,E,F,I,J,K,L,M and X, and forms trimeric complexes. Requires PSI electron transfer chain: 5 chlorophyll a, 1 chlorophyll a', 2 phylloquinones and 3 4Fe-4S clusters. PSI core antenna: 90 chlorophyll a, 22 carotenoids, 3 phospholipids and 1 galactolipid. P700 is a chlorophyll a/chlorophyll a' dimer, A0 is one or more chlorophyll a, A1 is one or both phylloquinones and FX is a shared 4Fe-4S iron-sulfur center. as cofactor.

It localises to the cellular thylakoid membrane. It catalyses the reaction reduced [plastocyanin] + hnu + oxidized [2Fe-2S]-[ferredoxin] = oxidized [plastocyanin] + reduced [2Fe-2S]-[ferredoxin]. PsaA and PsaB bind P700, the primary electron donor of photosystem I (PSI), as well as the electron acceptors A0, A1 and FX. PSI is a plastocyanin/cytochrome c6-ferredoxin oxidoreductase, converting photonic excitation into a charge separation, which transfers an electron from the donor P700 chlorophyll pair to the spectroscopically characterized acceptors A0, A1, FX, FA and FB in turn. Oxidized P700 is reduced on the lumenal side of the thylakoid membrane by plastocyanin or cytochrome c6. The sequence is that of Photosystem I P700 chlorophyll a apoprotein A1 from Acaryochloris marina (strain MBIC 11017).